The following is a 146-amino-acid chain: Protein SprT-like (146 aa).

The SprT-like domain occupies 4–142; the sequence is NEYVKQVSLE…GRCKGKLRLL (139 aa). His64 lines the Zn(2+) pocket. The active site involves Glu65. Position 68 (His68) interacts with Zn(2+).

The protein belongs to the SprT family. The cofactor is Zn(2+).

Its subcellular location is the cytoplasm. In Streptococcus gordonii (strain Challis / ATCC 35105 / BCRC 15272 / CH1 / DL1 / V288), this protein is Protein SprT-like.